Here is a 552-residue protein sequence, read N- to C-terminus: Eukaryotic translation initiation factor 3 subunit D (552 aa).

The segment at 288–302 is RNA gate; the sequence is DFDLLTVSETANEPP. Positions 525 to 552 are disordered; that stretch reads LPDGTFSSDEDEEEDDEDEEDEEEDEDN. Acidic residues predominate over residues 532–552; it reads SDEDEEEDDEDEEDEEEDEDN.

This sequence belongs to the eIF-3 subunit D family. Component of the eukaryotic translation initiation factor 3 (eIF-3) complex, which is composed of 13 subunits: eif3a, eif3b, eif3c, eif3d, eif3e, eif3f, eif3g, eif3h, eif3i, eif3j, eif3k, eif3l and eif3m.

The protein resides in the cytoplasm. Functionally, mRNA cap-binding component of the eukaryotic translation initiation factor 3 (eIF-3) complex, which is involved in protein synthesis of a specialized repertoire of mRNAs and, together with other initiation factors, stimulates binding of mRNA and methionyl-tRNAi to the 40S ribosome. The eIF-3 complex specifically targets and initiates translation of a subset of mRNAs involved in cell proliferation. In the eIF-3 complex, eif3d specifically recognizes and binds the 7-methylguanosine cap of a subset of mRNAs. This Danio rerio (Zebrafish) protein is Eukaryotic translation initiation factor 3 subunit D (eif3d).